Here is a 586-residue protein sequence, read N- to C-terminus: Chaperone protein HscA homolog (586 aa).

Belongs to the heat shock protein 70 family.

Functionally, chaperone involved in the maturation of iron-sulfur cluster-containing proteins. Has a low intrinsic ATPase activity which is markedly stimulated by HscB. This is Chaperone protein HscA homolog from Rickettsia typhi (strain ATCC VR-144 / Wilmington).